Here is a 139-residue protein sequence, read N- to C-terminus: Large ribosomal subunit protein uL16c (139 aa).

Over residues 1-17 the composition is skewed to basic residues; sequence MLSPKKTKFRKQHRGRM. The tract at residues 1–23 is disordered; the sequence is MLSPKKTKFRKQHRGRMKGSASK.

Belongs to the universal ribosomal protein uL16 family. As to quaternary structure, part of the 50S ribosomal subunit.

It is found in the plastid. Its subcellular location is the chloroplast. The protein is Large ribosomal subunit protein uL16c of Pyropia yezoensis (Susabi-nori).